A 103-amino-acid chain; its full sequence is MQPNDITFSQRFQDDILAGRKTITIRDESESHFKTGDVLRVGRFEDDGYFCTIEVTATSTVTLDTLTEKHAEQENMTLTELIKVIADIYPGQTQFYVIEFKCL.

Residues 6–101 (ITFSQRFQDD…QTQFYVIEFK (96 aa)) form the ASCH domain. The active-site Proton acceptor is the lysine 21. The active-site Nucleophile is the threonine 24. Residue glutamate 74 is the Proton donor of the active site.

The protein belongs to the N(4)-acetylcytidine amidohydrolase family.

The enzyme catalyses N(4)-acetylcytidine + H2O = cytidine + acetate + H(+). The catalysed reaction is N(4)-acetyl-2'-deoxycytidine + H2O = 2'-deoxycytidine + acetate + H(+). It catalyses the reaction N(4)-acetylcytosine + H2O = cytosine + acetate + H(+). Its function is as follows. Catalyzes the hydrolysis of N(4)-acetylcytidine (ac4C). The chain is N(4)-acetylcytidine amidohydrolase (yqfB) from Shigella boydii serotype 4 (strain Sb227).